The chain runs to 356 residues: MSLNSFGHIFRFTTWGESHGPALGAVVDGCPPGLALTEAQIQPFLDARRPGQSRFTTQRQEPDQVRILSGVFEGRTTGTPISLMIENVDQRSKDYGDVAKAYRPGHADYAYDAKYGFRDYRGGGRSSARETAARVAAGAVARLVIPEVSILAWVSEIGGDRIDMDHFDAAEIARNPFFCPDSWAAARWEKLVDDARKSGSSLGAVVECVATGVPAGWGAPLYAKLDAELAHAMMGINAVKGVEIGDGFAAARNTGEGNADPMRPGAGVPEFLANHAGGIAGGISTGQPVTVRVAFKPTSSILTPMPTITREGEATELLTKGRHDPCVGIRGVPVVEAMMALVLADQKLLHRGQCGG.

NADP(+)-binding residues include R48 and R54. Residues 125–127, 237–238, G281, 296–300, and R322 contribute to the FMN site; these read RSS, NA, and KPTSS.

Belongs to the chorismate synthase family. As to quaternary structure, homotetramer. Requires FMNH2 as cofactor.

It carries out the reaction 5-O-(1-carboxyvinyl)-3-phosphoshikimate = chorismate + phosphate. It functions in the pathway metabolic intermediate biosynthesis; chorismate biosynthesis; chorismate from D-erythrose 4-phosphate and phosphoenolpyruvate: step 7/7. Its function is as follows. Catalyzes the anti-1,4-elimination of the C-3 phosphate and the C-6 proR hydrogen from 5-enolpyruvylshikimate-3-phosphate (EPSP) to yield chorismate, which is the branch point compound that serves as the starting substrate for the three terminal pathways of aromatic amino acid biosynthesis. This reaction introduces a second double bond into the aromatic ring system. In Novosphingobium aromaticivorans (strain ATCC 700278 / DSM 12444 / CCUG 56034 / CIP 105152 / NBRC 16084 / F199), this protein is Chorismate synthase.